We begin with the raw amino-acid sequence, 421 residues long: Trimethyllysine dioxygenase, mitochondrial (421 aa).

A mitochondrion-targeting transit peptide spans 1 to 15; the sequence is MWYHRLSHLHSRLQD. N6-acetyllysine is present on residues Lys-179 and Lys-236. Fe cation is bound by residues His-242, Asp-244, and His-389.

The protein belongs to the gamma-BBH/TMLD family. As to quaternary structure, homodimer. Requires Fe(2+) as cofactor. L-ascorbate serves as cofactor. In terms of tissue distribution, all isoforms, but isoform 8, are widely expressed in adult and fetal tissues. Isoform 8 is restricted to heart and skeletal muscle.

It localises to the mitochondrion matrix. It catalyses the reaction N(6),N(6),N(6)-trimethyl-L-lysine + 2-oxoglutarate + O2 = (3S)-3-hydroxy-N(6),N(6),N(6)-trimethyl-L-lysine + succinate + CO2. The protein operates within amine and polyamine biosynthesis; carnitine biosynthesis. Functionally, converts trimethyllysine (TML) into hydroxytrimethyllysine (HTML). The sequence is that of Trimethyllysine dioxygenase, mitochondrial (TMLHE) from Homo sapiens (Human).